The following is a 511-amino-acid chain: Sporulation-specific chitinase 2 (511 aa).

The first 34 residues, 1–34 (MVGHSAQHRSKSSLVSHLLILLIFITIIIEMCLY), serve as a signal peptide directing secretion. Residues 73-472 (FISGVYYSNW…NAFNEGLHFN (400 aa)) enclose the GH18 domain. N147 carries N-linked (GlcNAc...) asparagine glycosylation. The Proton donor role is filled by E223. N228, N456, and N472 each carry an N-linked (GlcNAc...) asparagine glycan.

Belongs to the glycosyl hydrolase 18 family. Chitinase class III subfamily.

Its subcellular location is the secreted. The catalysed reaction is Random endo-hydrolysis of N-acetyl-beta-D-glucosaminide (1-&gt;4)-beta-linkages in chitin and chitodextrins.. This is Sporulation-specific chitinase 2 (CTS2) from Saccharomyces cerevisiae (strain ATCC 204508 / S288c) (Baker's yeast).